A 343-amino-acid polypeptide reads, in one-letter code: L-threonine 3-dehydrogenase (343 aa).

Residue Cys40 coordinates Zn(2+). Active-site charge relay system residues include Thr42 and His45. Positions 65, 66, 95, 98, 101, and 109 each coordinate Zn(2+). NAD(+) contacts are provided by residues Ile177, Asp197, Arg202, Leu264–Ile266, and Ile288–Tyr289.

This sequence belongs to the zinc-containing alcohol dehydrogenase family. Homotetramer. Zn(2+) serves as cofactor.

It localises to the cytoplasm. It carries out the reaction L-threonine + NAD(+) = (2S)-2-amino-3-oxobutanoate + NADH + H(+). Its pathway is amino-acid degradation; L-threonine degradation via oxydo-reductase pathway; glycine from L-threonine: step 1/2. Its function is as follows. Catalyzes the NAD(+)-dependent oxidation of L-threonine to 2-amino-3-ketobutyrate. In Vibrio parahaemolyticus serotype O3:K6 (strain RIMD 2210633), this protein is L-threonine 3-dehydrogenase.